Here is a 102-residue protein sequence, read N- to C-terminus: Protein translation factor SUI1 homolog (102 aa).

Belongs to the SUI1 family.

The chain is Protein translation factor SUI1 homolog from Methanococcus vannielii.